A 484-amino-acid chain; its full sequence is MTLTVYNTLTRRKEPLETLETGKIRMYCCGITVYDYCHLGHARTCMVWDVVRRYLQWRGYEVQYIQNFTDIDDKILNRARQEGTTMEAVSDRFIEAYFEDMEHLHVQKADAYPRATHTLNGIKRLVSELEAKGYAYQSNGDVYYSVRHFKDYGKLSGRKLEDLQAGASGRVEVQDPEAAKKKDPFDFAVWKAAKPGEPSWDSPWGQGRPGWHIECSAMVRERLGETIDIHVGGSDLIFPHHENEIAQSEAATGKPLARYWLHNGMVKVEGEKMSKSLGNFITIRDLLDKVDPMAMRLFILQAHYRKPVDFTDEALEAATNGWHTLKEGLLFGYNHGKQLNFTASPPHPLTSSPLTQRFQQAVDDDFNFAGGLAILFEIAKELRKEGNILVHQGQTETSPQVLEEQWRTLVELAGVLGLETDISEVQEAVGNGLSDAEIEELIEQRKIARQNKNYAEGDRLRDELKNQGIILVDQPGGITTWHRS.

Cysteine 29 contributes to the Zn(2+) binding site. The 'HIGH' region signature appears at 31–41 (ITVYDYCHLGH). Residues cysteine 215, histidine 240, and glutamate 244 each coordinate Zn(2+). The 'KMSKS' region motif lies at 272–276 (KMSKS). Lysine 275 contributes to the ATP binding site.

It belongs to the class-I aminoacyl-tRNA synthetase family. In terms of assembly, monomer. The cofactor is Zn(2+).

The protein localises to the cytoplasm. The catalysed reaction is tRNA(Cys) + L-cysteine + ATP = L-cysteinyl-tRNA(Cys) + AMP + diphosphate. This is Cysteine--tRNA ligase from Rippkaea orientalis (strain PCC 8801 / RF-1) (Cyanothece sp. (strain PCC 8801)).